The following is a 721-amino-acid chain: MTEHVFEATVNGKPFTIKTGRLAKQAAGAALVQYGETIVLVTVAAATEPKEDADFLPLSVEYQEKIYSAGRIPGNYFRREIGRPSEKETLTCRLTDRPIRPLFPAGYTFETQVITTVLSMDRENDPDVLSIVGASAALTISDLPFDGPLAAVRVGRLNGTLVANPTNTELDDCDINIVVAGSRSGVVMVEGGSNVVSEAEMLEAIFFGHNALLPLIDIQDQMRNACGKPKRVIVPPEKDTELETRIAELVGDAVAQAVTEPEKDARKSALSKVRENLFQGLGEAFADRKREIKGLFSDLVKKVCRDIVLNQGRRIDGRAFDEVRPISCEVGVLPRTHGSALFTRGETQVLGVMTLGSGHDEQRVETLFGDETRPFMLHYNFPPFCVGEVKRVMGPSRRDIGHGNLAHRGISYVLPDKETFDYTIRLVSEVLESNGSSSMGTVCSCILALMDGGVPIKAPVSGIAMGLVADGDKVAVLSDILGDEDHFGDMDFKVTGTEKGITALQMDIKIKSLSREILEKALHQAKDGRIHILGKMLEALSHYRDDISPYAPKIYIVKIHPDKIREIIGPGGKVIRELQAMSNTRIEVDDSGTVKIAASTEEEARIAIKAVEDIGRVPEPGEIYEGEVVRITDFGAFIQIKNGTDGLCHISELEHHHVKSVTDVVKMGDKVRVKVLEVSPEGKIRLSRKALLPAPEKGEEDEKSAPRSRRPGGNSDRRNNR.

Positions 485 and 491 each coordinate Mg(2+). A KH domain is found at 552 to 611 (PKIYIVKIHPDKIREIIGPGGKVIRELQAMSNTRIEVDDSGTVKIAASTEEEARIAIKAV). Residues 621 to 689 (GEIYEGEVVR…PEGKIRLSRK (69 aa)) enclose the S1 motif domain. The interval 687-721 (SRKALLPAPEKGEEDEKSAPRSRRPGGNSDRRNNR) is disordered.

This sequence belongs to the polyribonucleotide nucleotidyltransferase family. It depends on Mg(2+) as a cofactor.

It is found in the cytoplasm. The enzyme catalyses RNA(n+1) + phosphate = RNA(n) + a ribonucleoside 5'-diphosphate. Involved in mRNA degradation. Catalyzes the phosphorolysis of single-stranded polyribonucleotides processively in the 3'- to 5'-direction. The polypeptide is Polyribonucleotide nucleotidyltransferase (Desulfosudis oleivorans (strain DSM 6200 / JCM 39069 / Hxd3) (Desulfococcus oleovorans)).